Here is a 578-residue protein sequence, read N- to C-terminus: Arginine--tRNA ligase (578 aa).

Residues 123-133 (PNIAKEMHVGH) carry the 'HIGH' region motif.

Belongs to the class-I aminoacyl-tRNA synthetase family. In terms of assembly, monomer.

It localises to the cytoplasm. The catalysed reaction is tRNA(Arg) + L-arginine + ATP = L-arginyl-tRNA(Arg) + AMP + diphosphate. In Baumannia cicadellinicola subsp. Homalodisca coagulata, this protein is Arginine--tRNA ligase.